Reading from the N-terminus, the 490-residue chain is Cytochrome P450 monooxygenase anuE (490 aa).

Cys-405 provides a ligand contact to heme.

Belongs to the cytochrome P450 family. Heme serves as cofactor.

It catalyses the reaction 2-hydroxymethyl-3-pentylphenol + reduced [NADPH--hemoprotein reductase] + O2 = (8S)-annullatin E + oxidized [NADPH--hemoprotein reductase] + H2O + H(+). Its pathway is secondary metabolite biosynthesis. Functionally, cytochrome P450 monooxygenase; part of the gene cluster that mediates the biosynthesis of annullatin D, an alkylated aromatic polyketide with a fused dihydrobenzofuran lactone ring system that exhibits potent agonistic activities toward the cannabinoid receptors. Within the pathway, anuE catalyzes the hydroxylation of 2-hydroxymethyl-3-pentylphenol at the side chain to produce (8S)-annullatin E. The annullatin backbone 2-hydroxymethyl-3-pentylphenol is assembled from one acetyl-CoA starter unit and 5 malonyl-CoA elongation units by cooperation of the highly reducing polyketide synthase anuA, the short-chain dehydrogenase anuB and the oxidoreductase anuC, before being hydroxylated at the C-5 alkyl chain by the cytochrome P450 monooxygenase anuE to form (8S)-annullatin E. The prenyltransferase anuH subsequently installs one isoprenyl group at the benzene ring to form (8S)-annullatin J. Enzymatic or nonenzymatic dihydro-benzofuran ring formation between the prenyl and the phenolic hydroxyl groups in (8S)-annullatin J results in two diastereomers (2S,9S)-annullatin H and compound 12. The intermediate (2S,9S)-annullatin H is then converted to (2S,9S)-annullatin D by the FAD-linked oxidoreductase anuG-catalyzed five-member lactone ring formation. The isomer 12 acts as a substrate for the short-chain dehydrogenase anuF and is oxidized to (2R)-annullatin F, which is subsequently acetylated by an acetyltransferase leading to (2R)-annullatin G formation. The remaining enzymes identified within the cluster, anuD, anuI and anuJ, seem not to be involved in annullatin biosynthesis. The sequence is that of Cytochrome P450 monooxygenase anuE from Penicillium roqueforti (strain FM164).